The sequence spans 343 residues: MSDSGEPKPSQQEEPLPQPAAQETQSQQVCTFFKKPTKSKNIRKRTIDADEEDGDSKSESSILQNLKKVAKPDSKLYFSSGPSKSSTTTSGAPERSVFHYDSSKEIQVQNDSGATATLETETDFNQDARAIRERVLKKADEALKGNKKKASDEKLYKGIHGYTDHKAGFRREQTISSEKAGGSHGPLRASAHIRVSARFDYQPDICKDYKETGYCGYGDSCKFLHDRGDYKPGWQIEKEWEEAEKVRKRNKAMGVEDEDDEADKDSDEDENALPFACFICREPFVDPVVTKCKHYFCEHCALKHHTKNKKCFVCNQPTMGIFNAAHEIKKRMAEERSKAEQGL.

A disordered region spans residues 1–102 (MSDSGEPKPS…PERSVFHYDS (102 aa)). Residues 7–25 (PKPSQQEEPLPQPAAQETQ) are compositionally biased toward low complexity. Positions 35 to 44 (KPTKSKNIRK) are enriched in basic residues. Over residues 79–91 (SSGPSKSSTTTSG) the composition is skewed to low complexity. The C3H1-type zinc finger occupies 200 to 228 (DYQPDICKDYKETGYCGYGDSCKFLHDRG). The disordered stretch occupies residues 249-268 (RNKAMGVEDEDDEADKDSDE). Over residues 255–268 (VEDEDDEADKDSDE) the composition is skewed to acidic residues. An RING-type zinc finger spans residues 277 to 315 (CFICREPFVDPVVTKCKHYFCEHCALKHHTKNKKCFVCN).

The chain is Zinc finger CCCH domain-containing protein 1 from Arabidopsis thaliana (Mouse-ear cress).